A 509-amino-acid chain; its full sequence is Protein MAIN-LIKE 1 (509 aa).

The segment at 477–509 is disordered; sequence GYGKRRRRNEHTPTPNNGGGNDISSLLLQKEDS. Over residues 488-503 the composition is skewed to polar residues; the sequence is TPTPNNGGGNDISSLL.

As to expression, expressed in root tips, the shoot apical meristem (SAM), leaves, mature flowers and embryos.

It is found in the nucleus. In terms of biological role, acts as an important factor for cell fate determination and maintenance throughout plant development. Required for the organization of the root apical meristem (RAM) and the shoot apical meristem (SAM). Required to maintain genome stability and cell division activity in meristematic cells. This is Protein MAIN-LIKE 1 from Arabidopsis thaliana (Mouse-ear cress).